The sequence spans 253 residues: Probable U3 small nucleolar RNA-associated protein 11 (253 aa).

The interval 1–21 is disordered; the sequence is MAAAFRKAVKSRQREYRERSQ. Residues Lys74, Lys83, and Lys86 each participate in a glycyl lysine isopeptide (Lys-Gly) (interchain with G-Cter in SUMO2) cross-link. Thr90 is modified (phosphothreonine). Residues Lys103, Lys120, Lys143, Lys144, Lys180, Lys211, Lys218, Lys235, and Lys236 each participate in a glycyl lysine isopeptide (Lys-Gly) (interchain with G-Cter in SUMO2) cross-link. Residue Ser241 is modified to Phosphoserine. Lys246 is covalently cross-linked (Glycyl lysine isopeptide (Lys-Gly) (interchain with G-Cter in SUMO2)).

This sequence belongs to the UTP11 family. Part of the small subunit (SSU) processome, composed of more than 70 proteins and the RNA chaperone small nucleolar RNA (snoRNA) U3.

It localises to the nucleus. It is found in the nucleolus. Functionally, part of the small subunit (SSU) processome, first precursor of the small eukaryotic ribosomal subunit. During the assembly of the SSU processome in the nucleolus, many ribosome biogenesis factors, an RNA chaperone and ribosomal proteins associate with the nascent pre-rRNA and work in concert to generate RNA folding, modifications, rearrangements and cleavage as well as targeted degradation of pre-ribosomal RNA by the RNA exosome. Involved in nucleolar processing of pre-18S ribosomal RNA. The chain is Probable U3 small nucleolar RNA-associated protein 11 from Rattus norvegicus (Rat).